Here is a 131-residue protein sequence, read N- to C-terminus: Classical arabinogalactan protein 2 (131 aa).

The first 21 residues, 1–21 (MNSKAMQALIFLGFLATSCLA), serve as a signal peptide directing secretion. Gln22 is modified (pyrrolidone carboxylic acid). Residues Pro24, Pro26, Pro28, Pro34, and Pro35 each carry the 4-hydroxyproline modification. O-linked (Ara...) hydroxyproline glycans are attached at residues Pro24, Pro26, Pro28, Pro34, and Pro35. The tract at residues 24–106 (PAPAPTTVTP…PGPDGAADAP (83 aa)) is disordered. Composition is skewed to pro residues over residues 25–38 (APAP…PTAL) and 49–64 (IASP…PAPT). 2 stretches are compositionally biased toward low complexity: residues 65–76 (TSPTTSPVASPP) and 90–106 (TPTS…ADAP). The GPI-anchor amidated serine moiety is linked to residue Ser107. Residues 108 to 131 (AAWANKAFLVGTAVAGALYAVVLA) constitute a propeptide, removed in mature form.

This sequence belongs to the classical AGP family. O-glycosylated on hydroxyprolines; noncontiguous hydroxylproline residues are glycosylated with arabinogalactan.

The protein localises to the cell membrane. Its function is as follows. Proteoglycan that seems to be implicated in diverse developmental roles such as differentiation, cell-cell recognition, embryogenesis and programmed cell death. The protein is Classical arabinogalactan protein 2 (AGP2) of Arabidopsis thaliana (Mouse-ear cress).